We begin with the raw amino-acid sequence, 303 residues long: Probable 5-dehydro-4-deoxyglucarate dehydratase (303 aa).

The protein belongs to the DapA family.

It carries out the reaction 5-dehydro-4-deoxy-D-glucarate + H(+) = 2,5-dioxopentanoate + CO2 + H2O. It participates in carbohydrate acid metabolism; D-glucarate degradation; 2,5-dioxopentanoate from D-glucarate: step 2/2. The polypeptide is Probable 5-dehydro-4-deoxyglucarate dehydratase (Agrobacterium fabrum (strain C58 / ATCC 33970) (Agrobacterium tumefaciens (strain C58))).